Here is a 119-residue protein sequence, read N- to C-terminus: Divalent-cation tolerance protein CutA (119 aa).

Cu cation contacts are provided by cysteine 23, histidine 90, and histidine 91.

The protein belongs to the CutA family. In terms of assembly, homotrimer. Requires Cu cation as cofactor.

The protein localises to the cytoplasm. Involved in resistance toward heavy metals. This Yersinia pseudotuberculosis serotype O:1b (strain IP 31758) protein is Divalent-cation tolerance protein CutA.